The chain runs to 856 residues: Histone-lysine N-methyltransferase EZA1 (856 aa).

The span at 1–11 shows a compositional bias: polar residues; the sequence is MVTDDSNSSGR. Disordered stretches follow at residues 1–34, 66–87, and 366–473; these read MVTD…GLEN, VSPF…NSNM, and NVDS…HHGS. Residues 17-28 show a composition bias toward acidic residues; that stretch reads DDDDDGEEEEDR. Residues 22–49 adopt a coiled-coil conformation; the sequence is GEEEEDRLEGLENRLSELKRKIQGERVR. Over residues 68–87 the composition is skewed to polar residues; sequence PFSSAASSRATAEDNGNSNM. Over residues 374 to 392 the composition is skewed to basic and acidic residues; it reads EQEHGIRGKREVPILKDSN. The span at 393 to 419 shows a compositional bias: polar residues; sequence DLPNLSNKKQKTAASDTKMSFVNSVPS. Residues 438–451 show a composition bias toward basic and acidic residues; it reads KVNRDSEADAKEVG. The SANT domain maps to 489–539; it reads PSTEWNPIEKDLYLKGVEIFGRNSCLIARNLLSGLKTCLDVSNYMRENEVS. The region spanning 594-693 is the CXC domain; that stretch reads WKRIAGGKNQ…SLGEAPRRGE (100 aa). One can recognise an SET domain in the interval 707–822; it reads QRILLGKSDV…ASEELFYDYR (116 aa). Residue Tyr-821 coordinates S-adenosyl-L-methionine. The interval 827–856 is disordered; it reads QAPVWARKPEGSKKDDSAITHRRARKHQSH. Basic and acidic residues predominate over residues 833–845; sequence RKPEGSKKDDSAI. Residues 838–845 carry the Nuclear localization signal motif; that stretch reads SKKDDSAI. The segment covering 846–856 has biased composition (basic residues); the sequence is THRRARKHQSH.

The protein belongs to the class V-like SAM-binding methyltransferase superfamily. Histone-lysine methyltransferase family. EZ subfamily. In terms of assembly, component of the plant homeodomain / polycomb repressive complex 2 (PHD-PRC2) large complex during prolonged cold, composed of core PRC2 components (VRN2, EZA1, FIE and MSI1), and three related PHD finger proteins (VIL1, VIL2 and VIN3) that mediates histone H3 trimethylation on 'Lys-27' H3K27me3. Interacts with TAF13. Interacts with EOL1. Interacts (via SANT domain) with HXK1 in the nucleus.

The protein localises to the nucleus. It carries out the reaction L-lysyl(27)-[histone H3] + 3 S-adenosyl-L-methionine = N(6),N(6),N(6)-trimethyl-L-lysyl(27)-[histone H3] + 3 S-adenosyl-L-homocysteine + 3 H(+). Functionally, polycomb group (PcG) protein. Catalytic subunit of some PcG multiprotein complex, which methylates 'Lys-27' of histone H3, leading to transcriptional repression of the affected target genes, mainly abscisic acid (ABA) responsive elements. PcG proteins act by forming multiprotein complexes, which are required to maintain the transcriptionally repressive state of homeotic genes throughout development. PcG proteins are not required to initiate repression, but to maintain it during later stages of development. Forms a nuclear complex with CLF and HXK1 to target common glucose-responsive genes and regulate glucose signaling by glucose-mediated gene repression. Affects the recruitment of HXK1 to the target chromatin. The sequence is that of Histone-lysine N-methyltransferase EZA1 from Arabidopsis thaliana (Mouse-ear cress).